Reading from the N-terminus, the 995-residue chain is DExH-box ATP-dependent RNA helicase DExH10 (995 aa).

Residues 1-42 form a disordered region; that stretch reads MSAQMEEPETLGKRKESESSKLRSDETPTPEPRTKRRSLKRA. An N-acetylserine modification is found at Ser2. Residues 10–26 show a composition bias toward basic and acidic residues; it reads TLGKRKESESSKLRSDE. In terms of domain architecture, Helicase ATP-binding spans 90 to 246; that stretch reads VACLERKESI…WICYLHKQPC (157 aa). Residue 103-110 coordinates ATP; sequence AHTSAGKT. A DEIH box motif is present at residues 194 to 197; sequence DEIH. The disordered stretch occupies residues 290-318; the sequence is DTFPKPKSNDGKKSANGKSGGRGAKGGGG. Residues 307-318 are compositionally biased toward gly residues; it reads KSGGRGAKGGGG. Residues 323–524 form the Helicase C-terminal domain; the sequence is DVYKIVKMIM…LSYYTILNLL (202 aa).

This sequence belongs to the DExH box helicase family. SKI2 subfamily. As to expression, expressed in inflorescences, leaves, stems, and roots.

It is found in the nucleus. The protein localises to the nucleoplasm. It carries out the reaction ATP + H2O = ADP + phosphate + H(+). Its function is as follows. ATP-dependent RNA helicase that associates with the RNA exosome complex, with the cap binding complex (CBC) and with the NEXT-like complex. Involved in the degradation of a large number of non-coding nuclear exosome substrates such as snoRNA and miRNA precursors, incompletely spliced mRNAs, and spurious transcripts produced from pseudogenes and intergenic regions. Involved in the maintenance of homeotic B and C gene expression in the reproductive whorls. Regulates floral organ spacing and identity, probably through the regulation of protein synthesis or mRNA degradation. The polypeptide is DExH-box ATP-dependent RNA helicase DExH10 (Arabidopsis thaliana (Mouse-ear cress)).